The primary structure comprises 359 residues: Peptide chain release factor 1 (359 aa).

Position 236 is an N5-methylglutamine (Q236).

The protein belongs to the prokaryotic/mitochondrial release factor family. Methylated by PrmC. Methylation increases the termination efficiency of RF1.

Its subcellular location is the cytoplasm. Functionally, peptide chain release factor 1 directs the termination of translation in response to the peptide chain termination codons UAG and UAA. In Streptococcus pneumoniae serotype 19F (strain G54), this protein is Peptide chain release factor 1.